The sequence spans 192 residues: Peptidyl-tRNA hydrolase (192 aa).

Y17 is a binding site for tRNA. The active-site Proton acceptor is H22. Residues Y68, N70, and N116 each contribute to the tRNA site.

It belongs to the PTH family. Monomer.

Its subcellular location is the cytoplasm. It catalyses the reaction an N-acyl-L-alpha-aminoacyl-tRNA + H2O = an N-acyl-L-amino acid + a tRNA + H(+). In terms of biological role, hydrolyzes ribosome-free peptidyl-tRNAs (with 1 or more amino acids incorporated), which drop off the ribosome during protein synthesis, or as a result of ribosome stalling. Catalyzes the release of premature peptidyl moieties from peptidyl-tRNA molecules trapped in stalled 50S ribosomal subunits, and thus maintains levels of free tRNAs and 50S ribosomes. In Mycolicibacterium gilvum (strain PYR-GCK) (Mycobacterium gilvum (strain PYR-GCK)), this protein is Peptidyl-tRNA hydrolase.